The following is a 131-amino-acid chain: Small ribosomal subunit protein bS6 (131 aa).

The tract at residues Thr97–Glu131 is disordered. A compositionally biased stretch (basic and acidic residues) spans Lys104–Ala114. The span at Glu115–Glu131 shows a compositional bias: acidic residues.

Belongs to the bacterial ribosomal protein bS6 family.

Its function is as follows. Binds together with bS18 to 16S ribosomal RNA. This is Small ribosomal subunit protein bS6 from Proteus mirabilis (strain HI4320).